The following is a 157-amino-acid chain: Ubiquitin-like protein 4A (157 aa).

One can recognise a Ubiquitin-like domain in the interval 1-76 (MQLTVKALQG…LNLVVKPLEK (76 aa)). A Glycyl lysine isopeptide (Lys-Gly) (interchain with G-Cter in ubiquitin) cross-link involves residue Lys48. Ser90 is subject to Phosphoserine. A required and sufficient for interaction with BAG6 region spans residues 96 to 138 (WQLISKVLARHFSAADASRVLEQPQRDYERSLSRLTLDDIERL).

As to quaternary structure, component of the BAG6/BAT3 complex, at least composed of BAG6, UBL4A and GET4/TRC35. Interacts with BAG6; the interaction is direct and required for UBL4A protein stability. Interacts with USP13; may be indirect via BAG6. In terms of processing, polyubiquitinated. Ubiquitination by AMFR and deubiquitination by USP13 may regulate the interaction between the BAG6/BAT complex and SGTA and therefore may regulate client proteins fate.

It localises to the cytoplasm. The protein resides in the cytosol. It is found in the nucleus. As part of a cytosolic protein quality control complex, the BAG6/BAT3 complex, maintains misfolded and hydrophobic patches-containing proteins in a soluble state and participates in their proper delivery to the endoplasmic reticulum or alternatively can promote their sorting to the proteasome where they undergo degradation. The BAG6/BAT3 complex is involved in the post-translational delivery of tail-anchored/type II transmembrane proteins to the endoplasmic reticulum membrane. Recruited to ribosomes, it interacts with the transmembrane region of newly synthesized tail-anchored proteins and together with SGTA and ASNA1 mediates their delivery to the endoplasmic reticulum. Client proteins that cannot be properly delivered to the endoplasmic reticulum are ubiquitinated and sorted to the proteasome. Similarly, the BAG6/BAT3 complex also functions as a sorting platform for proteins of the secretory pathway that are mislocalized to the cytosol either delivering them to the proteasome for degradation or to the endoplasmic reticulum. The BAG6/BAT3 complex also plays a role in the endoplasmic reticulum-associated degradation (ERAD), a quality control mechanism that eliminates unwanted proteins of the endoplasmic reticulum through their retrotranslocation to the cytosol and their targeting to the proteasome. It maintains these retrotranslocated proteins in an unfolded yet soluble state condition in the cytosol to ensure their proper delivery to the proteasome. In Pongo abelii (Sumatran orangutan), this protein is Ubiquitin-like protein 4A (UBL4A).